Here is a 401-residue protein sequence, read N- to C-terminus: Glutamyl-tRNA reductase (401 aa).

Residues 45–48 (TCNR), S101, 106–108 (EDQ), and Q112 each bind substrate. C46 (nucleophile) is an active-site residue. 177-182 (GYGEVG) provides a ligand contact to NADP(+).

Belongs to the glutamyl-tRNA reductase family. Homodimer.

The catalysed reaction is (S)-4-amino-5-oxopentanoate + tRNA(Glu) + NADP(+) = L-glutamyl-tRNA(Glu) + NADPH + H(+). It functions in the pathway porphyrin-containing compound metabolism; protoporphyrin-IX biosynthesis; 5-aminolevulinate from L-glutamyl-tRNA(Glu): step 1/2. Its function is as follows. Catalyzes the NADPH-dependent reduction of glutamyl-tRNA(Glu) to glutamate 1-semialdehyde (GSA). The chain is Glutamyl-tRNA reductase from Clostridium beijerinckii (strain ATCC 51743 / NCIMB 8052) (Clostridium acetobutylicum).